The following is a 285-amino-acid chain: Polyamine aminopropyltransferase (285 aa).

Residues 2-237 (DLWFSESHTP…GYWCFGFASK (236 aa)) enclose the PABS domain. Residue Gln-31 coordinates S-methyl-5'-thioadenosine. Asp-86 contributes to the spermidine binding site. Residues Glu-106 and 137–138 (DG) each bind S-methyl-5'-thioadenosine. The active-site Proton acceptor is Asp-155.

The protein belongs to the spermidine/spermine synthase family. Homodimer or homotetramer.

The protein localises to the cytoplasm. The enzyme catalyses S-adenosyl 3-(methylsulfanyl)propylamine + putrescine = S-methyl-5'-thioadenosine + spermidine + H(+). It functions in the pathway amine and polyamine biosynthesis; spermidine biosynthesis; spermidine from putrescine: step 1/1. Functionally, catalyzes the irreversible transfer of a propylamine group from the amino donor S-adenosylmethioninamine (decarboxy-AdoMet) to putrescine (1,4-diaminobutane) to yield spermidine. This is Polyamine aminopropyltransferase from Streptococcus uberis (strain ATCC BAA-854 / 0140J).